Here is a 530-residue protein sequence, read N- to C-terminus: Probable cytochrome P450 519A1 (530 aa).

Residues 1 to 21 traverse the membrane as a helical segment; the sequence is MESIINLIFYIIIFLILIDFL. Cys476 provides a ligand contact to heme.

It belongs to the cytochrome P450 family. The cofactor is heme.

It is found in the membrane. This chain is Probable cytochrome P450 519A1 (cyp519A1), found in Dictyostelium discoideum (Social amoeba).